The sequence spans 160 residues: Vegetative-specific protein V4 (160 aa).

3 tandem repeats follow at residues 151-153 (NQP), 154-156 (NQP), and 157-159 (NQG). The 3 X 3 AA tandem repeats of N-Q-[PG] stretch occupies residues 151–159 (NQPNQPNQG).

In terms of biological role, unknown. Its expression during growth is not required for growth but for the proper initiation of development, therefore playing a role in the transition from growth to development. This Dictyostelium discoideum (Social amoeba) protein is Vegetative-specific protein V4 (lmcB).